The primary structure comprises 105 residues: Flagellar transcriptional regulator FlhD (105 aa).

This sequence belongs to the FlhD family. In terms of assembly, homodimer; disulfide-linked. Forms a heterohexamer composed of two FlhC and four FlhD subunits. Each FlhC binds a FlhD dimer, forming a heterotrimer, and a hexamer assembles by dimerization of two heterotrimers.

It is found in the cytoplasm. Its function is as follows. Functions in complex with FlhC as a master transcriptional regulator that regulates transcription of several flagellar and non-flagellar operons by binding to their promoter region. Activates expression of class 2 flagellar genes, including fliA, which is a flagellum-specific sigma factor that turns on the class 3 genes. Also regulates genes whose products function in a variety of physiological pathways. The chain is Flagellar transcriptional regulator FlhD from Nitrosomonas europaea (strain ATCC 19718 / CIP 103999 / KCTC 2705 / NBRC 14298).